The following is a 68-amino-acid chain: Ribosome modulation factor (68 aa).

Belongs to the ribosome modulation factor family.

The protein localises to the cytoplasm. Its function is as follows. During stationary phase, converts 70S ribosomes to an inactive dimeric form (100S ribosomes). The chain is Ribosome modulation factor from Saccharophagus degradans (strain 2-40 / ATCC 43961 / DSM 17024).